We begin with the raw amino-acid sequence, 419 residues long: UDP-N-acetylglucosamine 1-carboxyvinyltransferase (419 aa).

22–23 (KN) serves as a coordination point for phosphoenolpyruvate. Residue Arg-93 participates in UDP-N-acetyl-alpha-D-glucosamine binding. The active-site Proton donor is Cys-117. At Cys-117 the chain carries 2-(S-cysteinyl)pyruvic acid O-phosphothioketal. The UDP-N-acetyl-alpha-D-glucosamine site is built by Asp-307 and Ile-329.

It belongs to the EPSP synthase family. MurA subfamily.

It is found in the cytoplasm. It carries out the reaction phosphoenolpyruvate + UDP-N-acetyl-alpha-D-glucosamine = UDP-N-acetyl-3-O-(1-carboxyvinyl)-alpha-D-glucosamine + phosphate. It participates in cell wall biogenesis; peptidoglycan biosynthesis. Cell wall formation. Adds enolpyruvyl to UDP-N-acetylglucosamine. The protein is UDP-N-acetylglucosamine 1-carboxyvinyltransferase of Pseudoalteromonas atlantica (strain T6c / ATCC BAA-1087).